We begin with the raw amino-acid sequence, 152 residues long: UPF0225 protein YchJ (152 aa).

The protein belongs to the UPF0225 family.

In Escherichia coli O6:K15:H31 (strain 536 / UPEC), this protein is UPF0225 protein YchJ.